Reading from the N-terminus, the 157-residue chain is MEERAQHCLSRLLDNSALKQQELPIHRLYFTARRVLFVFFATGIFCLCMGIILILSARSTQEIEINYTRICANCAKLQENASNFDKECTCSIPFYLSGKMMGNVYMYYKLYGFYQNLYLYIRSRSNRQLVGKDVKVRLNLIWYNTLFLFLNQVDFSV.

The Cytoplasmic portion of the chain corresponds to Met1–Arg34. Residues Val35–Leu55 form a helical membrane-spanning segment. Topologically, residues Ser56–Val157 are extracellular. N-linked (GlcNAc...) asparagine glycosylation is present at Asn66.

Belongs to the CDC50/LEM3 family.

The protein resides in the membrane. The sequence is that of Cell cycle control protein 50C (TMEM30C) from Pan troglodytes (Chimpanzee).